The chain runs to 541 residues: Glucose-6-phosphate isomerase (541 aa).

Glu-346 (proton donor) is an active-site residue. Active-site residues include His-377 and Lys-506.

The protein belongs to the GPI family.

Its subcellular location is the cytoplasm. The catalysed reaction is alpha-D-glucose 6-phosphate = beta-D-fructose 6-phosphate. The protein operates within carbohydrate biosynthesis; gluconeogenesis. It functions in the pathway carbohydrate degradation; glycolysis; D-glyceraldehyde 3-phosphate and glycerone phosphate from D-glucose: step 2/4. Catalyzes the reversible isomerization of glucose-6-phosphate to fructose-6-phosphate. The protein is Glucose-6-phosphate isomerase of Rhizobium johnstonii (strain DSM 114642 / LMG 32736 / 3841) (Rhizobium leguminosarum bv. viciae).